A 207-amino-acid chain; its full sequence is Protein MK0488 (207 aa).

In terms of domain architecture, AMMECR1 spans 8–200 (EEGEFLVRLA…EEEPEGPVRE (193 aa)).

The polypeptide is Protein MK0488 (Methanopyrus kandleri (strain AV19 / DSM 6324 / JCM 9639 / NBRC 100938)).